The sequence spans 166 residues: Large ribosomal subunit protein uL10 (166 aa).

This sequence belongs to the universal ribosomal protein uL10 family. In terms of assembly, part of the ribosomal stalk of the 50S ribosomal subunit. The N-terminus interacts with L11 and the large rRNA to form the base of the stalk. The C-terminus forms an elongated spine to which L12 dimers bind in a sequential fashion forming a multimeric L10(L12)X complex.

Functionally, forms part of the ribosomal stalk, playing a central role in the interaction of the ribosome with GTP-bound translation factors. The chain is Large ribosomal subunit protein uL10 from Listeria innocua serovar 6a (strain ATCC BAA-680 / CLIP 11262).